The sequence spans 166 residues: Cofilin-1 (166 aa).

Ala-2 is modified (N-acetylalanine). Residues Ser-3 and Ser-8 each carry the phosphoserine modification. The region spanning 4-153 is the ADF-H domain; the sequence is GVAVSDGVIK…KDRCTLAEKL (150 aa). Lys-13 carries the post-translational modification N6-acetyllysine. The residue at position 25 (Thr-25) is a Phosphothreonine. The short motif at 30–34 is the Nuclear localization signal element; the sequence is KKRKK. Ser-41 carries the post-translational modification Phosphoserine. A Phosphotyrosine modification is found at Tyr-68. Lys-73 carries the N6-acetyllysine modification. Residue Lys-132 forms a Glycyl lysine isopeptide (Lys-Gly) (interchain with G-Cter in SUMO2) linkage. Residue Tyr-140 is modified to Phosphotyrosine. At Lys-144 the chain carries N6-acetyllysine. Ser-156 carries the phosphoserine modification.

It belongs to the actin-binding proteins ADF family. As to quaternary structure, can bind G- and F-actin in a 1:1 ratio of cofilin to actin. It is a major component of intranuclear and cytoplasmic actin rods. Interacts with the subcortical maternal complex (SCMC) via interaction with TLE6 and NLRP5. Interacts with C9orf72. Inactivated by phosphorylation on Ser-3. Phosphorylated on Ser-3 in resting cells. Dephosphorylated by PDXP/chronophin; this restores its activity in promoting actin filament depolymerization. The phosphorylation of Ser-24 may prevent recognition of the nuclear localization signal. Phosphorylated via a ARRB1-RAC1-LIMK1-PAK1 cascade upon active ligand stimulation of atypical chemokine receptor ACKR2.

It localises to the nucleus matrix. It is found in the cytoplasm. The protein localises to the cytoskeleton. Its subcellular location is the cell projection. The protein resides in the ruffle membrane. It localises to the lamellipodium membrane. It is found in the lamellipodium. The protein localises to the growth cone. Its subcellular location is the axon. Binds to F-actin and exhibits pH-sensitive F-actin depolymerizing activity. Important for normal progress through mitosis and normal cytokinesis. In conjunction with the subcortical maternal complex (SCMC), plays an essential role for zygotes to progress beyond the first embryonic cell divisions via regulation of actin dynamics. Required for the centralization of the mitotic spindle and symmetric division of zygotes. Plays a role in the regulation of cell morphology and cytoskeletal organization in epithelial cells. Required for the up-regulation of atypical chemokine receptor ACKR2 from endosomal compartment to cell membrane, increasing its efficiency in chemokine uptake and degradation. Required for neural tube morphogenesis and neural crest cell migration. In Rattus norvegicus (Rat), this protein is Cofilin-1 (Cfl1).